The chain runs to 29 residues: GLPICGETCFTGKCYTPGCTCSYPICKKN.

The cyclopeptide (Gly-Asn) cross-link spans 1 to 29; that stretch reads GLPICGETCFTGKCYTPGCTCSYPICKKN. 3 disulfide bridges follow: Cys-5–Cys-19, Cys-9–Cys-21, and Cys-14–Cys-26.

The protein belongs to the cyclotide family. Moebius subfamily. Post-translationally, this is a cyclic peptide.

Functionally, probably participates in a plant defense mechanism. The protein is Cyclotide mden-B of Melicytus dentatus (Tree violet).